Reading from the N-terminus, the 139-residue chain is Large ribosomal subunit protein uL16 (139 aa).

The segment covering 1-11 (MLQPKRTKYRK) has biased composition (basic residues). The segment at 1–30 (MLQPKRTKYRKPFLQSHDKRKAHKGNKVSF) is disordered.

It belongs to the universal ribosomal protein uL16 family. Part of the 50S ribosomal subunit.

Binds 23S rRNA and is also seen to make contacts with the A and possibly P site tRNAs. In Mycoplasmopsis synoviae (strain 53) (Mycoplasma synoviae), this protein is Large ribosomal subunit protein uL16.